Here is a 386-residue protein sequence, read N- to C-terminus: Protein phosphatase methylesterase 1 (386 aa).

The disordered stretch occupies residues 1–38; sequence MSALEKSMHLGRLPSRPPLPGSGGSQSGAKMRMGPGRK. Serine 15 carries the post-translational modification Phosphoserine. Arginine 16 is subject to Asymmetric dimethylarginine; alternate. Arginine 16 carries the omega-N-methylarginine; alternate modification. Active-site residues include serine 156 and aspartate 181. Positions 255–265 are enriched in acidic residues; it reads IEEEEEDEEGS. A disordered region spans residues 255–280; it reads IEEEEEDEEGSESVNKRKKEDDMETK. Over residues 268–280 the composition is skewed to basic and acidic residues; sequence VNKRKKEDDMETK. Histidine 349 is a catalytic residue.

Belongs to the AB hydrolase superfamily. In terms of assembly, binds PPP2CA and PPP2CB. Phosphorylated by SIK1 following increases in intracellular sodium, leading to dissociation from the protein phosphatase 2A (PP2A) complex and subsequent dephosphorylation of sodium/potassium-transporting ATPase ATP1A1. Ubiquitous. Highly expressed in testis and brain.

The catalysed reaction is [phosphatase 2A protein]-C-terminal L-leucine methyl ester + H2O = [phosphatase 2A protein]-C-terminal L-leucine + methanol + H(+). Demethylates proteins that have been reversibly carboxymethylated. Demethylates PPP2CB (in vitro) and PPP2CA. Binding to PPP2CA displaces the manganese ion and inactivates the enzyme. This is Protein phosphatase methylesterase 1 (Ppme1) from Mus musculus (Mouse).